The sequence spans 186 residues: MNKDMWKLSPKNIAALGIGSAVFVIVGRFASIPSGLPNTNFELVYAFLAMIAMIYGPTVGFGVGFIGHVLLDLMMYGQTWWNWNFAAGFLGFFIGLYALRVNIDQGEFSAKEMVIFNVVQVVANAIVWFLLGSVGDMVLNSEPAAKVFAQAGLTTLMDGLTIAVLGTILLKLYAGSRVKKGSLHKD.

The next 5 helical transmembrane spans lie at 13 to 33 (IAAL…ASIP), 46 to 66 (AFLA…VGFI), 79 to 99 (TWWN…LYAL), 114 to 134 (VIFN…LGSV), and 150 to 170 (QAGL…TILL).

This sequence belongs to the UPF0397 family.

The protein localises to the cell membrane. The polypeptide is UPF0397 protein LBUL_1584 (Lactobacillus delbrueckii subsp. bulgaricus (strain ATCC BAA-365 / Lb-18)).